The sequence spans 252 residues: Transcription factor bHLH117 (252 aa).

The disordered stretch occupies residues 103–141; it reads LFPSLSPPLPAAKRQKLNSTSSSTTSGSPTASNDGGIIT. Positions 121–134 are enriched in low complexity; that stretch reads STSSSTTSGSPTAS. The bHLH domain maps to 130 to 179; that stretch reads SPTASNDGGIITKRRKISDKIRSLEKLMPWERKMNLAMTLEESHKYIKFL.

Homodimer.

It localises to the nucleus. The sequence is that of Transcription factor bHLH117 (BHLH117) from Arabidopsis thaliana (Mouse-ear cress).